Here is a 750-residue protein sequence, read N- to C-terminus: Neprilysin (750 aa).

The segment covering 1 to 14 (MGRSESQMDITDIN) has biased composition (polar residues). The disordered stretch occupies residues 1–20 (MGRSESQMDITDINTPKPKK). The N-myristoyl glycine moiety is linked to residue glycine 2. Topologically, residues 2-28 (GRSESQMDITDINTPKPKKKQRWTPLE) are cytoplasmic. Serine 4 and serine 6 each carry phosphoserine. The Stop-transfer sequence motif lies at 16-23 (PKPKKKQR). Residues 29-51 (ISLSVLVLLLTVIAVTMIALYAT) form a helical; Signal-anchor for type II membrane protein membrane-spanning segment. Topologically, residues 52-750 (YDDGICKSSD…MNPEKKCRVW (699 aa)) are extracellular. One can recognise a Peptidase M13 domain in the interval 56-750 (ICKSSDCIKS…MNPEKKCRVW (695 aa)). Disulfide bonds link cysteine 57-cysteine 62, cysteine 80-cysteine 735, cysteine 88-cysteine 695, cysteine 143-cysteine 411, cysteine 234-cysteine 242, and cysteine 621-cysteine 747. Residue arginine 103 coordinates a peptide. Asparagine 145 carries an N-linked (GlcNAc...) asparagine glycan. 3 N-linked (GlcNAc...) asparagine glycosylation sites follow: asparagine 285, asparagine 311, and asparagine 325. Histidine 584 contributes to the Zn(2+) binding site. Glutamate 585 is a catalytic residue. Position 588 (histidine 588) interacts with Zn(2+). Residue asparagine 628 is glycosylated (N-linked (GlcNAc...) asparagine). Glutamate 647 is a Zn(2+) binding site. Aspartate 651 functions as the Proton donor in the catalytic mechanism.

Belongs to the peptidase M13 family. It depends on Zn(2+) as a cofactor. Post-translationally, myristoylation is a determinant of membrane targeting. In terms of processing, glycosylation at Asn-628 is necessary both for surface expression and neutral endopeptidase activity.

Its subcellular location is the cell membrane. It catalyses the reaction Preferential cleavage of polypeptides between hydrophobic residues, particularly with Phe or Tyr at P1'.. The catalysed reaction is substance P + H2O = substance P(1-9) + L-Leu-L-Met-NH2. The enzyme catalyses substance P + H2O = substance P(1-7) + L-Phe-Gly-L-Leu-L-Met-NH2. It carries out the reaction neurotensin + H2O = neurotensin(1-11) + L-isoleucyl-L-leucine. It catalyses the reaction neurotensin + H2O = neurotensin(1-10) + L-tyrosyl-L-isoleucyl-L-leucine. Inhibited by mixanpril, an orally-active drug used for the treatment of hypertension. Functionally, thermolysin-like specificity, but is almost confined on acting on polypeptides of up to 30 amino acids. Biologically important in the destruction of opioid peptides such as Met- and Leu-enkephalins by cleavage of a Gly-Phe bond. Catalyzes cleavage of bradykinin, substance P and neurotensin peptides. Able to cleave angiotensin-1, angiotensin-2 and angiotensin 1-9. Involved in the degradation of atrial natriuretic factor (ANF) and brain natriuretic factor (BNP(1-32)). Displays UV-inducible elastase activity toward skin preelastic and elastic fibers. The sequence is that of Neprilysin (MME) from Oryctolagus cuniculus (Rabbit).